A 317-amino-acid polypeptide reads, in one-letter code: Acetyl-coenzyme A carboxylase carboxyl transferase subunit alpha (317 aa).

The CoA carboxyltransferase C-terminal domain maps to 39–293 (KLEDKNRKLT…KDALGASLER (255 aa)).

This sequence belongs to the AccA family. In terms of assembly, acetyl-CoA carboxylase is a heterohexamer composed of biotin carboxyl carrier protein (AccB), biotin carboxylase (AccC) and two subunits each of ACCase subunit alpha (AccA) and ACCase subunit beta (AccD).

It localises to the cytoplasm. The catalysed reaction is N(6)-carboxybiotinyl-L-lysyl-[protein] + acetyl-CoA = N(6)-biotinyl-L-lysyl-[protein] + malonyl-CoA. It participates in lipid metabolism; malonyl-CoA biosynthesis; malonyl-CoA from acetyl-CoA: step 1/1. Component of the acetyl coenzyme A carboxylase (ACC) complex. First, biotin carboxylase catalyzes the carboxylation of biotin on its carrier protein (BCCP) and then the CO(2) group is transferred by the carboxyltransferase to acetyl-CoA to form malonyl-CoA. In Chromohalobacter salexigens (strain ATCC BAA-138 / DSM 3043 / CIP 106854 / NCIMB 13768 / 1H11), this protein is Acetyl-coenzyme A carboxylase carboxyl transferase subunit alpha.